An 87-amino-acid polypeptide reads, in one-letter code: MAKVIIEIKNTVSGIKGRNLRTSIAVDGSAELDGDEGTLAGMVALLVLNKSQKIINESAHEAIEILKNDGVITSGRVTEMAVEKTCH.

The protein resides in the host cytoplasm. This is an uncharacterized protein from Escherichia phage Mu (Bacteriophage Mu).